Here is a 284-residue protein sequence, read N- to C-terminus: 2-dehydro-3-deoxyphosphooctonate aldolase (284 aa).

Belongs to the KdsA family.

The protein resides in the cytoplasm. The enzyme catalyses D-arabinose 5-phosphate + phosphoenolpyruvate + H2O = 3-deoxy-alpha-D-manno-2-octulosonate-8-phosphate + phosphate. It participates in carbohydrate biosynthesis; 3-deoxy-D-manno-octulosonate biosynthesis; 3-deoxy-D-manno-octulosonate from D-ribulose 5-phosphate: step 2/3. The protein operates within bacterial outer membrane biogenesis; lipopolysaccharide biosynthesis. This Haemophilus influenzae (strain ATCC 51907 / DSM 11121 / KW20 / Rd) protein is 2-dehydro-3-deoxyphosphooctonate aldolase (kdsA).